A 218-amino-acid polypeptide reads, in one-letter code: MGQKINPLGFRLGTTQSHHSVWFAQPKKYSEGLEEDKKIRDCIKNYVQKNIRISSGMEGIARIEIQKRIDLIQIIIYMGFPKLLIEDKPRRVEELQMNVQKELNCVNRKLNIAITRISNPYGQPNILAEFIAGQLKNRVSFRKAMKKAIELTEQANTKGIQVQIAGRIDGKEIARVEWIREGRVPLQTIDAKIDYCSYTVRTIYGVLGIKIWIFVDEE.

The KH type-2 domain maps to 47–118 (VQKNIRISSG…KLNIAITRIS (72 aa)).

Belongs to the universal ribosomal protein uS3 family. Part of the 30S ribosomal subunit.

It is found in the plastid. The protein resides in the chloroplast. The polypeptide is Small ribosomal subunit protein uS3c (rps3) (Arabis hirsuta (Hairy rock-cress)).